Reading from the N-terminus, the 66-residue chain is MAKKNASLLVKLVSTATKTTKTGEEKLTGYFCVKKRNPKNLPKKLEFRKYDPVVRRHVLFKEEKLK.

It belongs to the bacterial ribosomal protein bL33 family.

In Wolbachia pipientis subsp. Culex pipiens (strain wPip), this protein is Large ribosomal subunit protein bL33.